Reading from the N-terminus, the 133-residue chain is Carbohydrate-binding protein AWN (133 aa).

Ala1 bears the N-acetylalanine mark. 2 disulfides stabilise this stretch: Cys9-Cys30 and Cys53-Cys74. The CUB domain maps to Cys9 to Asp110. Residues Ile73–Asp110 are heparin-binding.

This sequence belongs to the spermadhesin family.

The protein resides in the secreted. Functionally, mediates the binding of spermatozoa to component(s) of the egg's zona pellucida by a carbohydrate-binding mechanism. It is a secretory component of the male accessory glands being coated to the sperm surface at the time of ejaculation. This Equus caballus (Horse) protein is Carbohydrate-binding protein AWN.